Consider the following 706-residue polypeptide: F-box/WD repeat-containing protein 7 (706 aa).

Residues 1–157 (MNQELLSVGS…IVDLPIHQRS (157 aa)) are disordered. Ser26 is modified (phosphoserine). The span at 32 to 54 (QMNRVLEEEQQQPRHQEEEHAAR) shows a compositional bias: basic and acidic residues. A compositionally biased stretch (polar residues) spans 69–83 (NDPQQGQLEENNNRF). Acidic residues predominate over residues 86-128 (VDEDSSGNQEEQEEDEEHAGEQDEEDEEEEEMDQESDDFDQSD). Positions 129 to 138 (DSSREDEHTH) are enriched in basic and acidic residues. Thr204 bears the Phosphothreonine mark. Ser226 carries the post-translational modification Phosphoserine. In terms of domain architecture, F-box spans 277–323 (RDFISLLPKELALYVLSFLEPKDLLQAAQTCRYWRILAEDNLLWREK). 7 WD repeats span residues 377-417 (GHDD…RTLV), 419-455 (HTGG…CIHT), 458-497 (GHTS…HVLM), 499-535 (HVAA…CLHT), 538-577 (GHTN…HTLT), 579-617 (HQSL…QTLQ), and 621-658 (KHQS…FIRN).

As to quaternary structure, homodimer; homodimerization plays a role in substrate binding and/or ubiquitination and degradation. Component of the SCF(FBXW7) complex consisting of CUL1, RBX1, SKP1 and FBXW7. Interacts (via F-box domain) with SKP1. Interacts (via F-box domain) with pseudophosphatase STYX; the interaction is direct and prevents FBXW7 interaction with SKP1. Interacts with cyclin-E (CCNE1 or CCNE2). Interacts with PSEN1. Forms a trimeric complex with NOTCH1 and SGK1. Interacts with NOTCH1 intracellular domain/NICD and NOTCH4 intracellular domain/NICD. Interacts with NOTCH2 intracellular domain (N2ICD). Interacts with MYC (when phosphorylated). Interacts with USP28, counteracting ubiquitination of MYC. Interacts with JUN. Found in a complex with JUN and PRR7. Interacts with JUN and PRR7; the interaction inhibits ubiquitination-mediated JUN degradation, promoting its phosphorylation and transcriptional activity. Interacts (when phosphorylated at Thr-204) with PIN1, disrupting FBXW7 dimerization and promoting FBXW7 autoubiquitination and degradation. Interacts with UBE2QL1. Interacts with FAM83D; promotes FBXW7 degradation. Interacts with MYCN; FBXW7 competes with AURKA for binding to unphosphorylated MYCN but not for binding to phosphorylated MYCN. Interacts with STOML1. Interacts with NFE2L1. Interacts with USP36, counteracting ubiquitination of MYC. Interacts with RICTOR; mediates RICTOR ubiquitination and degradation.l Interacts with USP38, counteracting ubiquitination of MYC. (Microbial infection) In case of infection, interacts with T.annulata PIN1 (TaPIN1); leading to FBXW7 autoubiquitination and subsequent degradation: FBXW7 degradation promotes stabilization of JUN, which promotes cell transformation. Post-translationally, phosphorylation at Thr-204 promotes interaction with PIN1, leading to disrupt FBXW7 dimerization and promoting FBXW7 autoubiquitination and degradation. Phosphorylated by ATM at Ser-26 in response to DNA damage, promoting recruitment to DNA damage sites and 'Lys-63'-linked ubiquitination of phosphorylated XRCC4. Ubiquitinated: autoubiquitinates following phosphorylation at Thr-204 and subsequent interaction with PIN1. Ubiquitination leads to its degradation.

The protein resides in the nucleus. It is found in the nucleoplasm. The protein localises to the chromosome. It functions in the pathway protein modification; protein ubiquitination. In terms of biological role, substrate recognition component of a SCF (SKP1-CUL1-F-box protein) E3 ubiquitin-protein ligase complex which mediates the ubiquitination and subsequent proteasomal degradation of target proteins. Recognizes and binds phosphorylated sites/phosphodegrons within target proteins and thereafter brings them to the SCF complex for ubiquitination. Identified substrates include cyclin-E (CCNE1 or CCNE2), DISC1, JUN, MYC, NOTCH1 released notch intracellular domain (NICD), NOTCH2, MCL1, MLST8, RICTOR, and probably PSEN1. Acts as a negative regulator of JNK signaling by binding to phosphorylated JUN and promoting its ubiquitination and subsequent degradation. SCF(FBXW7) complex mediates the ubiquitination and subsequent degradation of NFE2L1. Involved in bone homeostasis and negative regulation of osteoclast differentiation. Also able to promote 'Lys-63'-linked ubiquitination in response to DNA damage. The SCF(FBXW7) complex facilitates double-strand break repair following phosphorylation by ATM: phosphorylation promotes localization to sites of double-strand breaks and 'Lys-63'-linked ubiquitination of phosphorylated XRCC4, enhancing DNA non-homologous end joining. The sequence is that of F-box/WD repeat-containing protein 7 from Bos taurus (Bovine).